A 415-amino-acid polypeptide reads, in one-letter code: Phosphoribosylamine--glycine ligase (415 aa).

Residues 108 to 311 (KKIMEKYNIP…LMQHIIDLDE (204 aa)) form the ATP-grasp domain. An ATP-binding site is contributed by 134–191 (IENCEFPVVVKKDGLAAGKGVIIADTIEAARSAIEIMYGDEEEGTVVFETFLEGEEFS). Mg(2+) is bound by residues Glu-281 and Asn-283.

It belongs to the GARS family. It depends on Mg(2+) as a cofactor. The cofactor is Mn(2+).

It carries out the reaction 5-phospho-beta-D-ribosylamine + glycine + ATP = N(1)-(5-phospho-beta-D-ribosyl)glycinamide + ADP + phosphate + H(+). It functions in the pathway purine metabolism; IMP biosynthesis via de novo pathway; N(1)-(5-phospho-D-ribosyl)glycinamide from 5-phospho-alpha-D-ribose 1-diphosphate: step 2/2. This Staphylococcus aureus (strain MRSA252) protein is Phosphoribosylamine--glycine ligase.